A 472-amino-acid polypeptide reads, in one-letter code: Cell division protein FtsP (472 aa).

The tat-type signal signal peptide spans 1–32 (MSLSRRRFIQASGLALCAGGLPLQARASGAQA).

This sequence belongs to the FtsP family. Predicted to be exported by the Tat system. The position of the signal peptide cleavage has not been experimentally proven.

It is found in the periplasm. Cell division protein that is required for growth during stress conditions. May be involved in protecting or stabilizing the divisomal assembly under conditions of stress. This is Cell division protein FtsP from Edwardsiella tarda (strain FL6-60).